A 341-amino-acid chain; its full sequence is Cysteine-rich repeat secretory protein 1 (341 aa).

The N-terminal stretch at 1–25 (MFSLPLHQSKLIFLLSFLLIKTLNA) is a signal peptide. Gnk2-homologous domains lie at 28-131 (TYLL…SRKI) and 136-245 (DQGP…ATFL). Intrachain disulfides connect Cys85/Cys94, Cys97/Cys122, Cys199/Cys208, and Cys211/Cys236. Positions 247-262 (PPPPPPPPPPPPPPPQ) are enriched in pro residues. Residues 247 to 274 (PPPPPPPPPPPPPPPQRLYGENDTPSSD) are disordered.

Belongs to the cysteine-rich repeat secretory protein family.

The protein localises to the secreted. This is Cysteine-rich repeat secretory protein 1 (CRRSP1) from Arabidopsis thaliana (Mouse-ear cress).